A 371-amino-acid polypeptide reads, in one-letter code: Choline kinase B1 (371 aa).

Belongs to the choline/ethanolamine kinase family. Requires Mg(2+) as cofactor.

It carries out the reaction choline + ATP = phosphocholine + ADP + H(+). This Caenorhabditis elegans protein is Choline kinase B1 (ckb-1).